Reading from the N-terminus, the 368-residue chain is Cytochrome b-c1 complex subunit 2, mitochondrial (368 aa).

A mitochondrion-targeting transit peptide spans 1–16; sequence MLSAARLQFAQGSVRR. Phosphoserine occurs at positions 141 and 168.

It belongs to the peptidase M16 family. UQCRC2/QCR2 subfamily. As to quaternary structure, component of the ubiquinol-cytochrome c oxidoreductase (cytochrome b-c1 complex, complex III, CIII), a multisubunit enzyme composed of 10 subunits. The complex is composed of 3 respiratory subunits cytochrome b (COB), cytochrome c1 (CYT1) and Rieske protein (RIP1), 2 core protein subunits COR1 and QCR2, and 5 low-molecular weight protein subunits QCR6, QCR7, QCR8, QCR9 and QCR10. The complex exists as an obligatory dimer and forms supercomplexes (SCs) in the inner mitochondrial membrane with a monomer or a dimer of cytochrome c oxidase (complex IV, CIV), resulting in 2 different assemblies (supercomplexes III(2)IV and III(2)IV(2)).

It is found in the mitochondrion inner membrane. In terms of biological role, component of the ubiquinol-cytochrome c oxidoreductase, a multisubunit transmembrane complex that is part of the mitochondrial electron transport chain which drives oxidative phosphorylation. The respiratory chain contains 3 multisubunit complexes succinate dehydrogenase (complex II, CII), ubiquinol-cytochrome c oxidoreductase (cytochrome b-c1 complex, complex III, CIII) and cytochrome c oxidase (complex IV, CIV), that cooperate to transfer electrons derived from NADH and succinate to molecular oxygen, creating an electrochemical gradient over the inner membrane that drives transmembrane transport and the ATP synthase. The cytochrome b-c1 complex catalyzes electron transfer from ubiquinol to cytochrome c, linking this redox reaction to translocation of protons across the mitochondrial inner membrane, with protons being carried across the membrane as hydrogens on the quinol. In the process called Q cycle, 2 protons are consumed from the matrix, 4 protons are released into the intermembrane space and 2 electrons are passed to cytochrome c. The polypeptide is Cytochrome b-c1 complex subunit 2, mitochondrial (QCR2) (Saccharomyces cerevisiae (strain ATCC 204508 / S288c) (Baker's yeast)).